Consider the following 269-residue polypeptide: Ribosomal RNA small subunit methyltransferase A (269 aa).

S-adenosyl-L-methionine is bound by residues N11, L13, G37, E57, D85, and N104.

It belongs to the class I-like SAM-binding methyltransferase superfamily. rRNA adenine N(6)-methyltransferase family. RsmA subfamily.

It localises to the cytoplasm. The catalysed reaction is adenosine(1518)/adenosine(1519) in 16S rRNA + 4 S-adenosyl-L-methionine = N(6)-dimethyladenosine(1518)/N(6)-dimethyladenosine(1519) in 16S rRNA + 4 S-adenosyl-L-homocysteine + 4 H(+). Specifically dimethylates two adjacent adenosines (A1518 and A1519) in the loop of a conserved hairpin near the 3'-end of 16S rRNA in the 30S particle. May play a critical role in biogenesis of 30S subunits. The chain is Ribosomal RNA small subunit methyltransferase A from Campylobacter hominis (strain ATCC BAA-381 / DSM 21671 / CCUG 45161 / LMG 19568 / NCTC 13146 / CH001A).